The primary structure comprises 22 residues: Mu-conotoxin SxIIIC (22 aa).

Cystine bridges form between Cys-3–Cys-15, Cys-4–Cys-21, and Cys-10–Cys-22. Cys-22 is subject to Cysteine amide.

Belongs to the conotoxin M superfamily. As to expression, expressed by the venom duct.

Its subcellular location is the secreted. Mu-conotoxins block voltage-gated sodium channels (Nav). This toxin potently inhibits hNav1.4/SCN4A (IC(50)=15.11 nM). It also displays lower activities on other human subtypes (Nav1.1/SCN1A; IC(50)=132 nM, Nav1.2/SCN2A; IC(50)=363.8, Nav1.3/SCN3A; IC(50)=89.4, Nav1.6/SCN3A; IC(50)=124.9, Nav1.7/SCN7A; IC(50)=152.2). At Nav1.7/SCN9A, it does not elicit change in channel voltage-dependence of fast inactivation or activation, suggesting it acts as a pore blocker. Interestingly, it blocks current inhibition in an irreversible manner (tested during 35 minutes). The polypeptide is Mu-conotoxin SxIIIC (Conus striolatus (Cone snail)).